The following is a 312-amino-acid chain: Olfactory receptor 4F3/4F16/4F29 (312 aa).

At 1–25 (MDGENHSVVSEFLFLGLTHSWEIQL) the chain is on the extracellular side. Asn-5 carries N-linked (GlcNAc...) asparagine glycosylation. Residues 26–49 (LLLVFSSVLYVASITGNILIVFSV) traverse the membrane as a helical segment. Topologically, residues 50–57 (TTDPHLHS) are cytoplasmic. A helical transmembrane segment spans residues 58-79 (PMYFLLASLSFIDLGACSVTSP). Over 80-100 (KMIYDLFRKRKVISFGGCIAQ) the chain is Extracellular. Cysteines 97 and 189 form a disulfide. The chain crosses the membrane as a helical span at residues 101–120 (IFFIHVVGGVEMVLLIAMAF). The Cytoplasmic portion of the chain corresponds to 121 to 139 (DRYVALCKPLHYLTIMSPR). A helical transmembrane segment spans residues 140 to 158 (MCLSFLAVAWTLGVSHSLF). The Extracellular segment spans residues 159–195 (QLAFLVNLAFCGPNVLDSFYCDLPRLLRLACTDTYRL). The helical transmembrane segment at 196-219 (QFMVTVNSGFICVGTFFILLISYV) threads the bilayer. Topologically, residues 220-235 (FILFTVWKHSSGGSSK) are cytoplasmic. A helical membrane pass occupies residues 236 to 258 (ALSTLSAHSTVVLLFFGPPMFVY). The Extracellular segment spans residues 259–269 (TRPHPNSQMDK). Residues 270–289 (FLAIFDAVLTPFLNPVVYTF) form a helical membrane-spanning segment. The Cytoplasmic portion of the chain corresponds to 290–312 (RNKEMKAAIKRVCKQLVIYKRIS).

The protein belongs to the G-protein coupled receptor 1 family.

Its subcellular location is the cell membrane. Odorant receptor. The sequence is that of Olfactory receptor 4F3/4F16/4F29 (OR4F3) from Homo sapiens (Human).